A 212-amino-acid polypeptide reads, in one-letter code: Photosynthetic NDH subunit of subcomplex B 5, chloroplastic (212 aa).

A chloroplast-targeting transit peptide spans 1 to 48; that stretch reads MATVTILSPKSIPKVTDSKFGARVSDQIVNVVKCGKSGRRLKLAKLVS. 2 helical membrane passes run 115-135 and 136-156; these read FQGLISCMFLPAIALGMYFDA and PGEYLFIGAALFTVVFCIIEM.

In terms of assembly, part of the chloroplast NDH complex, composed of a mixture of chloroplast and nucleus encoded subunits. Component of the NDH subcomplex B, at least composed of PnsB1, PnsB2, PnsB3, PnsB4 and PnsB5.

It is found in the plastid. It localises to the chloroplast membrane. NDH shuttles electrons from NAD(P)H:plastoquinone, via FMN and iron-sulfur (Fe-S) centers, to quinones in the photosynthetic chain and possibly in a chloroplast respiratory chain. The immediate electron acceptor for the enzyme in this species is believed to be plastoquinone. Couples the redox reaction to proton translocation, and thus conserves the redox energy in a proton gradient. This Arabidopsis thaliana (Mouse-ear cress) protein is Photosynthetic NDH subunit of subcomplex B 5, chloroplastic.